The primary structure comprises 500 residues: Lycopene beta cyclase, chloroplastic (500 aa).

Residues 1-81 (MDTLLKTPNK…ELPMYDPSKG (81 aa)) constitute a chloroplast transit peptide. 86–114 (LAVVGGGPAGLAVAQQVSEAGLSVVSIDP) contacts NAD(+).

The protein belongs to the lycopene cyclase family.

The protein resides in the plastid. It is found in the chloroplast. The enzyme catalyses a carotenoid psi-end group = a carotenoid beta-end derivative. It functions in the pathway carotenoid biosynthesis; beta-carotene biosynthesis. It participates in carotenoid biosynthesis; beta-zeacarotene biosynthesis. Catalyzes the double cyclization reaction which converts lycopene to beta-carotene and neurosporene to beta-zeacarotene. The protein is Lycopene beta cyclase, chloroplastic (LCY1) of Nicotiana tabacum (Common tobacco).